Reading from the N-terminus, the 168-residue chain is Alpha-amylase/trypsin inhibitor CM3 (168 aa).

An N-terminal signal peptide occupies residues 1-25 (MACKSSCSLLLLAAVLLSVLAAASA).

It belongs to the protease inhibitor I6 (cereal trypsin/alpha-amylase inhibitor) family. As to quaternary structure, subunit of the tetrameric inhibitor. Post-translationally, five disulfide bonds, which are essential for the inhibitor activity, are probably present. In terms of tissue distribution, developing endosperm.

Its subcellular location is the secreted. In terms of biological role, alpha-amylase/trypsin inhibitor. It could be involved in insect defense mechanisms. The polypeptide is Alpha-amylase/trypsin inhibitor CM3 (Triticum aestivum (Wheat)).